Consider the following 160-residue polypeptide: Glucagon-1 (160 aa).

Residues 1–22 (MSDPGFLAAPVLLLLLVSLASA) form the signal peptide. Propeptides lie at residues 23-40 (SLEQAASRDDDSAERPLS), 74-79 (GGSELQ), and 116-127 (DGGDHLAENSED). A disordered region spans residues 112-132 (KSRRDGGDHLAENSEDKRHAE).

Belongs to the glucagon family.

It localises to the secreted. Promotes hydrolysis of glycogen and lipids, and raises the blood sugar level. The polypeptide is Glucagon-1 (gcg1) (Petromyzon marinus (Sea lamprey)).